Reading from the N-terminus, the 193-residue chain is Ribosomal RNA large subunit methyltransferase E (193 aa).

Positions 51, 53, 69, 85, and 108 each coordinate S-adenosyl-L-methionine. Lys148 acts as the Proton acceptor in catalysis.

The protein belongs to the class I-like SAM-binding methyltransferase superfamily. RNA methyltransferase RlmE family.

The protein localises to the cytoplasm. The enzyme catalyses uridine(2552) in 23S rRNA + S-adenosyl-L-methionine = 2'-O-methyluridine(2552) in 23S rRNA + S-adenosyl-L-homocysteine + H(+). Specifically methylates the uridine in position 2552 of 23S rRNA at the 2'-O position of the ribose in the fully assembled 50S ribosomal subunit. In Methanoregula boonei (strain DSM 21154 / JCM 14090 / 6A8), this protein is Ribosomal RNA large subunit methyltransferase E.